A 361-amino-acid chain; its full sequence is Probable dual-specificity RNA methyltransferase RlmN (361 aa).

Glutamate 91 (proton acceptor) is an active-site residue. The 239-residue stretch at glutamine 97–aspartate 335 folds into the Radical SAM core domain. The cysteines at positions 104 and 340 are disulfide-linked. [4Fe-4S] cluster is bound by residues cysteine 111, cysteine 115, and cysteine 118. S-adenosyl-L-methionine contacts are provided by residues glycine 163 to glutamate 164, serine 195, serine 218 to histidine 220, and asparagine 296. Cysteine 340 (S-methylcysteine intermediate) is an active-site residue.

The protein belongs to the radical SAM superfamily. RlmN family. Requires [4Fe-4S] cluster as cofactor.

The protein localises to the cytoplasm. The catalysed reaction is adenosine(2503) in 23S rRNA + 2 reduced [2Fe-2S]-[ferredoxin] + 2 S-adenosyl-L-methionine = 2-methyladenosine(2503) in 23S rRNA + 5'-deoxyadenosine + L-methionine + 2 oxidized [2Fe-2S]-[ferredoxin] + S-adenosyl-L-homocysteine. It catalyses the reaction adenosine(37) in tRNA + 2 reduced [2Fe-2S]-[ferredoxin] + 2 S-adenosyl-L-methionine = 2-methyladenosine(37) in tRNA + 5'-deoxyadenosine + L-methionine + 2 oxidized [2Fe-2S]-[ferredoxin] + S-adenosyl-L-homocysteine. Functionally, specifically methylates position 2 of adenine 2503 in 23S rRNA and position 2 of adenine 37 in tRNAs. The chain is Probable dual-specificity RNA methyltransferase RlmN from Streptococcus mutans serotype c (strain ATCC 700610 / UA159).